The following is a 64-amino-acid chain: MRLHHLLLALLFLVLSAWSGFTQGVGNPVSCVRNKGICVPIRCPGSMKQIGTCVGRAVKCCRKK.

Positions 1-26 are cleaved as a signal peptide; it reads MRLHHLLLALLFLVLSAWSGFTQGVG. 3 cysteine pairs are disulfide-bonded: cysteine 31-cysteine 60, cysteine 38-cysteine 53, and cysteine 43-cysteine 61.

This sequence belongs to the beta-defensin family. LAP/TAP subfamily. As to expression, tracheal epithelium.

The protein localises to the secreted. Functionally, has antibacterial activity in vitro against Escherichia coli, Staphylococcus aureus, Klebsiella pneumonia, and Pseudomonas aeruginosa. In addition, the peptide is active against Candida albicans, indicating a broad spectrum of activity. The protein is Tracheal antimicrobial peptide of Bos taurus (Bovine).